We begin with the raw amino-acid sequence, 168 residues long: uncharacterized protein (168 aa).

4 consecutive transmembrane segments (helical) span residues 1-21, 41-61, 68-88, and 123-143; these read MFWL…AVAR, PYII…VLLM, WWLG…WALC, and VILE…MCLF.

The protein localises to the cell membrane. This is an uncharacterized protein from Bacillus subtilis (strain 168).